A 461-amino-acid chain; its full sequence is Argininosuccinate lyase (461 aa).

Belongs to the lyase 1 family. Argininosuccinate lyase subfamily.

It localises to the cytoplasm. It catalyses the reaction 2-(N(omega)-L-arginino)succinate = fumarate + L-arginine. Its pathway is amino-acid biosynthesis; L-arginine biosynthesis; L-arginine from L-ornithine and carbamoyl phosphate: step 3/3. This Aeromonas hydrophila subsp. hydrophila (strain ATCC 7966 / DSM 30187 / BCRC 13018 / CCUG 14551 / JCM 1027 / KCTC 2358 / NCIMB 9240 / NCTC 8049) protein is Argininosuccinate lyase.